We begin with the raw amino-acid sequence, 321 residues long: Peptidase 1 (321 aa).

Positions 1–18 (MKFVLAIASLLVLSTVYA) are cleaved as a signal peptide. Residues 19-98 (RPASIKTFEE…LKTQFDLNAE (80 aa)) constitute a propeptide, activation peptide. 3 disulfide bridges follow: cysteine 102-cysteine 216, cysteine 130-cysteine 170, and cysteine 164-cysteine 202. The active site involves cysteine 133. Asparagine 151 carries N-linked (GlcNAc...) asparagine glycosylation. Residues histidine 269 and arginine 288 contribute to the active site.

It belongs to the peptidase C1 family. In terms of assembly, monomer.

The protein resides in the secreted. The enzyme catalyses Broad endopeptidase specificity.. Functionally, thiol protease that hydrolyzes proteins, with a preference for Phe or basic residues. The protein is Peptidase 1 (DERF1) of Dermatophagoides farinae (American house dust mite).